Reading from the N-terminus, the 357-residue chain is Heat-inducible transcription repressor HrcA (357 aa).

It belongs to the HrcA family.

Its function is as follows. Negative regulator of class I heat shock genes (grpE-dnaK-dnaJ and groELS operons). Prevents heat-shock induction of these operons. This Anabaena sp. (strain L31) protein is Heat-inducible transcription repressor HrcA.